We begin with the raw amino-acid sequence, 314 residues long: 4-hydroxy-3-methylbut-2-enyl diphosphate reductase (314 aa).

Cys-12 contributes to the [4Fe-4S] cluster binding site. His-43 and His-81 together coordinate (2E)-4-hydroxy-3-methylbut-2-enyl diphosphate. Dimethylallyl diphosphate-binding residues include His-43 and His-81. 2 residues coordinate isopentenyl diphosphate: His-43 and His-81. Cys-103 serves as a coordination point for [4Fe-4S] cluster. His-131 contributes to the (2E)-4-hydroxy-3-methylbut-2-enyl diphosphate binding site. His-131 is a binding site for dimethylallyl diphosphate. His-131 is a binding site for isopentenyl diphosphate. Residue Glu-133 is the Proton donor of the active site. Residue Thr-170 participates in (2E)-4-hydroxy-3-methylbut-2-enyl diphosphate binding. Cys-198 lines the [4Fe-4S] cluster pocket. The (2E)-4-hydroxy-3-methylbut-2-enyl diphosphate site is built by Ser-226, Asn-228, and Ser-271. Dimethylallyl diphosphate-binding residues include Ser-226, Asn-228, and Ser-271. Positions 226, 228, and 271 each coordinate isopentenyl diphosphate.

This sequence belongs to the IspH family. Requires [4Fe-4S] cluster as cofactor.

The enzyme catalyses isopentenyl diphosphate + 2 oxidized [2Fe-2S]-[ferredoxin] + H2O = (2E)-4-hydroxy-3-methylbut-2-enyl diphosphate + 2 reduced [2Fe-2S]-[ferredoxin] + 2 H(+). It catalyses the reaction dimethylallyl diphosphate + 2 oxidized [2Fe-2S]-[ferredoxin] + H2O = (2E)-4-hydroxy-3-methylbut-2-enyl diphosphate + 2 reduced [2Fe-2S]-[ferredoxin] + 2 H(+). Its pathway is isoprenoid biosynthesis; dimethylallyl diphosphate biosynthesis; dimethylallyl diphosphate from (2E)-4-hydroxy-3-methylbutenyl diphosphate: step 1/1. It participates in isoprenoid biosynthesis; isopentenyl diphosphate biosynthesis via DXP pathway; isopentenyl diphosphate from 1-deoxy-D-xylulose 5-phosphate: step 6/6. Functionally, catalyzes the conversion of 1-hydroxy-2-methyl-2-(E)-butenyl 4-diphosphate (HMBPP) into a mixture of isopentenyl diphosphate (IPP) and dimethylallyl diphosphate (DMAPP). Acts in the terminal step of the DOXP/MEP pathway for isoprenoid precursor biosynthesis. In Bacillus subtilis (strain 168), this protein is 4-hydroxy-3-methylbut-2-enyl diphosphate reductase.